A 244-amino-acid chain; its full sequence is Small ribosomal subunit protein uS2 (244 aa).

This sequence belongs to the universal ribosomal protein uS2 family.

The protein is Small ribosomal subunit protein uS2 of Desulforudis audaxviator (strain MP104C).